The sequence spans 58 residues: UPF0391 membrane protein Patl_4137 (58 aa).

2 helical membrane passes run 4-24 (WALT…GGIA) and 27-47 (AAGI…LSLV).

This sequence belongs to the UPF0391 family.

The protein resides in the cell membrane. This chain is UPF0391 membrane protein Patl_4137, found in Pseudoalteromonas atlantica (strain T6c / ATCC BAA-1087).